Reading from the N-terminus, the 321-residue chain is Ribosomal RNA small subunit methyltransferase H (321 aa).

Residues 42–44 (GGH), D62, F86, D107, and Q114 each bind S-adenosyl-L-methionine.

This sequence belongs to the methyltransferase superfamily. RsmH family.

The protein resides in the cytoplasm. It catalyses the reaction cytidine(1402) in 16S rRNA + S-adenosyl-L-methionine = N(4)-methylcytidine(1402) in 16S rRNA + S-adenosyl-L-homocysteine + H(+). In terms of biological role, specifically methylates the N4 position of cytidine in position 1402 (C1402) of 16S rRNA. In Herminiimonas arsenicoxydans, this protein is Ribosomal RNA small subunit methyltransferase H.